We begin with the raw amino-acid sequence, 619 residues long: Phosphoenolpyruvate carboxykinase [GTP] (619 aa).

Substrate-binding positions include R81 and 230 to 232 (YGG). The Mn(2+) site is built by K239 and H259. S281 contributes to the substrate binding site. 282 to 287 (ACGKTN) contacts GTP. Residue C283 is part of the active site. D306 contributes to the Mn(2+) binding site. 399-401 (NSR) contacts substrate. Residues R401, R432, and 525 to 528 (YGQN) each bind GTP.

Belongs to the phosphoenolpyruvate carboxykinase [GTP] family. Monomer. It depends on Mn(2+) as a cofactor.

It catalyses the reaction oxaloacetate + GTP = phosphoenolpyruvate + GDP + CO2. Functionally, in parasitic nematodes PEPCK carboxylates phosphoenolpyruvate to oxaloacetate thus introducing the products of glycolysis to mitochondrial metabolism. In terms of biological role, catalyzes the conversion of oxaloacetate (OAA) to phosphoenolpyruvate (PEP), the rate-limiting step in the metabolic pathway that produces glucose from lactate and other precursors derived from the citric acid cycle. In Haemonchus contortus (Barber pole worm), this protein is Phosphoenolpyruvate carboxykinase [GTP] (PEPCK).